The following is a 322-amino-acid chain: Zinc finger C2HC domain-containing protein CBG14627 (322 aa).

2 consecutive C2HC/C3H-type zinc fingers follow at residues 9–38 (PVYP…LATL) and 119–148 (DYVQ…QTTR). Zn(2+)-binding residues include Cys13, Cys16, His28, Cys32, Cys123, Cys126, His138, and Cys142. A disordered region spans residues 144-322 (EQTTRKQGGK…SRNNSRSRIF (179 aa)). Residues 148 to 168 (RKQGGKSSAGNRGLTSNNYRS) are compositionally biased toward polar residues. Residues 171–219 (SKHEGRKQESSSRNGSAERKTTTRGRDGSLSRARRDDSNDLTNRRKSLE) show a composition bias toward basic and acidic residues. Positions 220 to 238 (TRSQLTTGQANNRTTSLSA) are enriched in polar residues. A compositionally biased stretch (low complexity) spans 278 to 294 (TTTTASASRSGSGSSSR). Basic and acidic residues predominate over residues 296–305 (RTRDESRESR). Residues 311–322 (SNSRNNSRSRIF) show a composition bias toward low complexity.

The protein belongs to the ZC2HC1 family. The cofactor is Zn(2+).

This chain is Zinc finger C2HC domain-containing protein CBG14627, found in Caenorhabditis briggsae.